The sequence spans 23 residues: Potassium channel toxin alpha-KTx 13.3 (23 aa).

Cystine bridges form between Cys2/Cys15, Cys5/Cys20, and Cys9/Cys22. The interval Gly13–Cys20 is interaction with Ca(2+)-activated K(+) channels. Tyr23 bears the Tyrosine amide mark.

In terms of tissue distribution, expressed by the venom gland.

It localises to the secreted. Reversibly blocks Shaker B potassium channels, with a dissociation constant of 200 nM. This chain is Potassium channel toxin alpha-KTx 13.3, found in Tityus pachyurus (Colombian scorpion).